The chain runs to 532 residues: Bone morphogenetic protein receptor type-1A (532 aa).

Positions 1–23 are cleaved as a signal peptide; the sequence is MPQLYIYIRLLGAYLFIISRVQG. Residues 24–152 lie on the Extracellular side of the membrane; the sequence is QNLDSMLHGT…IGPFFDGSIR (129 aa). Disulfide bonds link C61/C82, C63/C67, and C76/C100. The N-linked (GlcNAc...) asparagine glycan is linked to N73. Residues 107–109 are mediates specificity for BMP ligand; that stretch reads DFQ. Cystine bridges form between C110-C124 and C125-C130. A helical membrane pass occupies residues 153–176; sequence WLVLLISMAVCIIAMIIFSSCFCY. Topologically, residues 177 to 532 are cytoplasmic; that stretch reads KHYCKSISSR…KMVESQDVKI (356 aa). The 30-residue stretch at 204 to 233 folds into the GS domain; that stretch reads ESLKDLIDQSQSSGSGSGLPLLVQRTIAKQ. The Protein kinase domain occupies 234–525; it reads IQMVRQVGKG…RIKKTLAKMV (292 aa). ATP contacts are provided by residues 240–248 and K261; that span reads VGKGRYGEV. The active-site Proton acceptor is the D362.

Belongs to the protein kinase superfamily. TKL Ser/Thr protein kinase family. TGFB receptor subfamily. As to quaternary structure, interacts with low affinity with GDF5; positively regulates chondrocyte differentiation. Interacts with BMP4. Interacts with SCUBE3. Interacts with TSC22D1/TSC-22. Interacts with BMP2; the interaction may induce HAMP expression. Interacts with BMP6. Interacts with heterodimers composed of BMP2 and BMP6 in vitro; the interaction may induce HAMP expression. Interacts with TGFBR3. Mg(2+) is required as a cofactor. Requires Mn(2+) as cofactor. Glycosylated. In terms of tissue distribution, highly expressed in skeletal muscle.

The protein localises to the cell membrane. Its subcellular location is the cell surface. It carries out the reaction L-threonyl-[receptor-protein] + ATP = O-phospho-L-threonyl-[receptor-protein] + ADP + H(+). The catalysed reaction is L-seryl-[receptor-protein] + ATP = O-phospho-L-seryl-[receptor-protein] + ADP + H(+). Functionally, on ligand binding, forms a receptor complex consisting of two type II and two type I transmembrane serine/threonine kinases. Type II receptors phosphorylate and activate type I receptors which autophosphorylate, then bind and activate SMAD transcriptional regulators. Receptor for BMP2, BMP4, GDF5 and GDF6. Positively regulates chondrocyte differentiation through GDF5 interaction. Mediates induction of adipogenesis by GDF6. May promote the expression of HAMP, potentially via its interaction with BMP2. The sequence is that of Bone morphogenetic protein receptor type-1A (BMPR1A) from Homo sapiens (Human).